Reading from the N-terminus, the 198-residue chain is Recombination protein RecR (198 aa).

The C4-type zinc-finger motif lies at 57 to 72; sequence CRQCRTLSEEELCPQC. A Toprim domain is found at 80–174; that stretch reads SLLCVVEGPL…TLSRIAHGVP (95 aa).

The protein belongs to the RecR family.

Its function is as follows. May play a role in DNA repair. It seems to be involved in an RecBC-independent recombinational process of DNA repair. It may act with RecF and RecO. This is Recombination protein RecR from Pseudomonas aeruginosa (strain LESB58).